The primary structure comprises 179 residues: Large ribosomal subunit protein uL5 (179 aa).

Belongs to the universal ribosomal protein uL5 family. In terms of assembly, part of the 50S ribosomal subunit; part of the 5S rRNA/L5/L18/L25 subcomplex. Contacts the 5S rRNA and the P site tRNA. Forms a bridge to the 30S subunit in the 70S ribosome.

Its function is as follows. This is one of the proteins that bind and probably mediate the attachment of the 5S RNA into the large ribosomal subunit, where it forms part of the central protuberance. In the 70S ribosome it contacts protein S13 of the 30S subunit (bridge B1b), connecting the 2 subunits; this bridge is implicated in subunit movement. Contacts the P site tRNA; the 5S rRNA and some of its associated proteins might help stabilize positioning of ribosome-bound tRNAs. In Pseudomonas paraeruginosa (strain DSM 24068 / PA7) (Pseudomonas aeruginosa (strain PA7)), this protein is Large ribosomal subunit protein uL5.